Reading from the N-terminus, the 184-residue chain is Putative manganese efflux pump MntP (184 aa).

The next 6 helical transmembrane spans lie at 12 to 32 (SIMA…MGMI), 39 to 59 (IIYI…FGML), 63 to 83 (LLSG…LLVL), 99 to 119 (FIAP…LDSF), 132 to 152 (VWMT…LGLL), and 164 to 184 (YSGA…LFPL).

This sequence belongs to the MntP (TC 9.B.29) family.

The protein resides in the cell membrane. Its function is as follows. Probably functions as a manganese efflux pump. This is Putative manganese efflux pump MntP from Bacillus pumilus (strain SAFR-032).